The following is a 686-amino-acid chain: Pollen receptor-like kinase 5 (686 aa).

A signal peptide spans 1–39 (MRNWEDPFTLACNTALKKNLPSCIFIIIFISVLCPVAMS). The Extracellular segment spans residues 40-283 (QVVVPDSDAD…GKKAGSFYTL (244 aa)). N60 carries an N-linked (GlcNAc...) asparagine glycan. LRR repeat units follow at residues 112-135 (MKNLRTISFMNNNFNGPMPQVKRF), 136-159 (TSLKSLYLSNNRFSGEIPADAFLG), 161-184 (PLLKKILLANNAFRGTIPSSLASL), 185-208 (PMLLELRLNGNQFQGQIPSFQQKD), and 210-230 (KLASFENNDLDGPIPESLRNM). A helical transmembrane segment spans residues 284-304 (AIILIVIGIILVIIALVFCFV). Residues 305–686 (QSRRRNFLSA…DDDFGFSMNR (382 aa)) lie on the Cytoplasmic side of the membrane. The segment covering 328-339 (NYHQSTNKNNKP) has biased composition (polar residues). Residues 328-355 (NYHQSTNKNNKPAESVNHTRRGSMPDPG) form a disordered region. The Protein kinase domain occupies 375 to 648 (RASAEVLGSG…REVVEMVEML (274 aa)). Residue S377 is modified to Phosphoserine. Residues 381-389 (LGSGTFGAS) and K403 contribute to the ATP site. Residues S455 and S458 each carry the phosphoserine modification. A Phosphothreonine modification is found at T472. Y542 bears the Phosphotyrosine mark. S545 carries the post-translational modification Phosphoserine.

The protein belongs to the protein kinase superfamily. Ser/Thr protein kinase family. As to quaternary structure, interacts with the GRI peptide. As to expression, expressed in pollen and/or in flowers. Detected at low levels in leaves.

The protein resides in the cell membrane. It carries out the reaction L-seryl-[protein] + ATP = O-phospho-L-seryl-[protein] + ADP + H(+). The catalysed reaction is L-threonyl-[protein] + ATP = O-phospho-L-threonyl-[protein] + ADP + H(+). Its function is as follows. Receptor-like kinase involved in the control of pollen germination and pollen tube polar growth. The extracellular domain serves as a sensor for peptides derived from GRI. May act as a downstream element for ROS-dependent cell death induced by GRI. This Arabidopsis thaliana (Mouse-ear cress) protein is Pollen receptor-like kinase 5.